Here is an 80-residue protein sequence, read N- to C-terminus: RNA-binding protein KhpA (80 aa).

The region spanning 33-80 is the KH domain; the sequence is LEILQLRVASEDVGKVIGKHGRIARALRTLLSASAHASQTRYALEIID.

This sequence belongs to the KhpA RNA-binding protein family. Forms a complex with KhpB.

It is found in the cytoplasm. Functionally, a probable RNA chaperone. Forms a complex with KhpB which binds to cellular RNA and controls its expression. Plays a role in peptidoglycan (PG) homeostasis and cell length regulation. This Treponema pallidum (strain Nichols) protein is RNA-binding protein KhpA.